A 126-amino-acid chain; its full sequence is uncharacterized protein (126 aa).

The next 2 membrane-spanning stretches (helical) occupy residues 21–43 (LIVW…RIFS) and 48–70 (SVTF…LLLL).

It localises to the membrane. This is an uncharacterized protein from Saccharomyces cerevisiae (strain ATCC 204508 / S288c) (Baker's yeast).